Consider the following 45-residue polypeptide: Host translation inhibitor E66L (45 aa).

Belongs to the asfivirus E66L family.

It localises to the host endoplasmic reticulum. Its function is as follows. Inhibits host protein translation, probably through the EIF2AK2/EIF2S1 signaling pathway. Promotes cell retention in the G0/G1 phase. The sequence is that of Host translation inhibitor E66L from Ornithodoros (relapsing fever ticks).